The chain runs to 130 residues: Large ribosomal subunit protein eL34 (130 aa).

The interval 111–130 (KPVSKPPKIQKTAKAASKSK) is disordered.

It belongs to the eukaryotic ribosomal protein eL34 family.

This chain is Large ribosomal subunit protein eL34 (RpL34), found in Aedes albopictus (Asian tiger mosquito).